The following is a 378-amino-acid chain: Polygalacturonase (378 aa).

An N-terminal signal peptide occupies residues 1–20; sequence MILTRSVVLGFLGSASLALA. A disulfide bridge connects residues C39 and C57. PbH1 repeat units lie at residues 172–203, 204–225, 226–246, 255–276, and 284–306; these read SSGLTISGVTIDNKNGDTNSLGHNTDGFDIGD, SDSITITGATVYNQDDCLAINS, GTNIVFSGGYCSGGHGLSIGS, VETVHISSTQVVNSQNGVRVKA, and IKGVTFQDITLSGITSQGITIRQ. D218 (proton donor) is an active-site residue. An intrachain disulfide couples C220 to C236. The active site involves H240. 2 disulfide bridges follow: C346-C352 and C370-C378.

Belongs to the glycosyl hydrolase 28 family.

Its subcellular location is the secreted. It carries out the reaction (1,4-alpha-D-galacturonosyl)n+m + H2O = (1,4-alpha-D-galacturonosyl)n + (1,4-alpha-D-galacturonosyl)m.. The sequence is that of Polygalacturonase (PEPG1) from Penicillium expansum (Blue mold rot fungus).